The following is a 406-amino-acid chain: Zinc finger protein 793 (406 aa).

A KRAB domain is found at 8 to 79 (VSFKDVVVGF…EAACPGCHCW (72 aa)). 6 consecutive C2H2-type zinc fingers follow at residues 227 to 249 (HVCS…QRSH), 255 to 277 (YGCT…QRIH), 283 to 305 (FECF…QRTH), 311 to 333 (FVCS…RKMH), 339 to 361 (YRCR…WRTH), and 367 to 389 (YGCN…QKIH).

This sequence belongs to the krueppel C2H2-type zinc-finger protein family.

Its subcellular location is the nucleus. Its function is as follows. May be involved in transcriptional regulation. This is Zinc finger protein 793 (ZNF793) from Homo sapiens (Human).